The sequence spans 181 residues: Large ribosomal subunit protein uL5 (181 aa).

It belongs to the universal ribosomal protein uL5 family. As to quaternary structure, part of the 50S ribosomal subunit; part of the 5S rRNA/L5/L18/L25 subcomplex. Contacts the 5S rRNA and the P site tRNA. Forms a bridge to the 30S subunit in the 70S ribosome.

Its function is as follows. This is one of the proteins that bind and probably mediate the attachment of the 5S RNA into the large ribosomal subunit, where it forms part of the central protuberance. In the 70S ribosome it contacts protein S13 of the 30S subunit (bridge B1b), connecting the 2 subunits; this bridge is implicated in subunit movement. Contacts the P site tRNA; the 5S rRNA and some of its associated proteins might help stabilize positioning of ribosome-bound tRNAs. This is Large ribosomal subunit protein uL5 from Helicobacter pylori (strain G27).